The chain runs to 602 residues: Aspartate--tRNA(Asp/Asn) ligase (602 aa).

E170 is an L-aspartate binding site. The interval 194 to 197 is aspartate; the sequence is QLFK. Residue R216 participates in L-aspartate binding. ATP contacts are provided by residues 216-218 and Q225; that span reads RDE. An L-aspartate-binding site is contributed by H448. E482 provides a ligand contact to ATP. R489 is a binding site for L-aspartate. 534 to 537 lines the ATP pocket; it reads GWDR. The segment at 559–602 is disordered; the sequence is GGVDPLTNAPAPITAQQRKESGVDAKPEPKGDAASAKPDAPADK. Residues 575–589 are compositionally biased toward basic and acidic residues; sequence QRKESGVDAKPEPKG. Low complexity predominate over residues 590-602; that stretch reads DAASAKPDAPADK.

The protein belongs to the class-II aminoacyl-tRNA synthetase family. Type 1 subfamily. Homodimer.

It is found in the cytoplasm. It carries out the reaction tRNA(Asx) + L-aspartate + ATP = L-aspartyl-tRNA(Asx) + AMP + diphosphate. Aspartyl-tRNA synthetase with relaxed tRNA specificity since it is able to aspartylate not only its cognate tRNA(Asp) but also tRNA(Asn). Reaction proceeds in two steps: L-aspartate is first activated by ATP to form Asp-AMP and then transferred to the acceptor end of tRNA(Asp/Asn). The sequence is that of Aspartate--tRNA(Asp/Asn) ligase from Rhodococcus jostii (strain RHA1).